A 585-amino-acid polypeptide reads, in one-letter code: Arginine--tRNA ligase (585 aa).

Residues 131-141 (ANPTGPMHVGH) carry the 'HIGH' region motif.

The protein belongs to the class-I aminoacyl-tRNA synthetase family. As to quaternary structure, monomer.

The protein localises to the cytoplasm. It catalyses the reaction tRNA(Arg) + L-arginine + ATP = L-arginyl-tRNA(Arg) + AMP + diphosphate. The polypeptide is Arginine--tRNA ligase (Bartonella tribocorum (strain CIP 105476 / IBS 506)).